A 229-amino-acid polypeptide reads, in one-letter code: Large ribosomal subunit protein uL1 (229 aa).

Belongs to the universal ribosomal protein uL1 family. Part of the 50S ribosomal subunit.

Binds directly to 23S rRNA. The L1 stalk is quite mobile in the ribosome, and is involved in E site tRNA release. In terms of biological role, protein L1 is also a translational repressor protein, it controls the translation of the L11 operon by binding to its mRNA. The protein is Large ribosomal subunit protein uL1 of Listeria monocytogenes serovar 1/2a (strain ATCC BAA-679 / EGD-e).